A 169-amino-acid chain; its full sequence is Large ribosomal subunit protein uL10 (169 aa).

Belongs to the universal ribosomal protein uL10 family. As to quaternary structure, part of the ribosomal stalk of the 50S ribosomal subunit. The N-terminus interacts with L11 and the large rRNA to form the base of the stalk. The C-terminus forms an elongated spine to which L12 dimers bind in a sequential fashion forming a multimeric L10(L12)X complex.

Functionally, forms part of the ribosomal stalk, playing a central role in the interaction of the ribosome with GTP-bound translation factors. The sequence is that of Large ribosomal subunit protein uL10 from Rickettsia felis (strain ATCC VR-1525 / URRWXCal2) (Rickettsia azadi).